The primary structure comprises 508 residues: UDP-N-acetylmuramoyl-L-alanyl-D-glutamate--2,6-diaminopimelate ligase (508 aa).

Position 29 (Ser-29) interacts with UDP-N-acetyl-alpha-D-muramoyl-L-alanyl-D-glutamate. An ATP-binding site is contributed by 112-118; sequence GTNGKTS. UDP-N-acetyl-alpha-D-muramoyl-L-alanyl-D-glutamate contacts are provided by residues 159–160, Ser-186, Gln-192, and Arg-194; that span reads TT. At Lys-226 the chain carries N6-carboxylysine. Residues Arg-398, 421 to 424, Gly-473, and Glu-477 each bind meso-2,6-diaminopimelate; that span reads DNPR. The Meso-diaminopimelate recognition motif motif lies at 421 to 424; the sequence is DNPR.

It belongs to the MurCDEF family. MurE subfamily. Mg(2+) serves as cofactor. Carboxylation is probably crucial for Mg(2+) binding and, consequently, for the gamma-phosphate positioning of ATP.

It is found in the cytoplasm. The enzyme catalyses UDP-N-acetyl-alpha-D-muramoyl-L-alanyl-D-glutamate + meso-2,6-diaminopimelate + ATP = UDP-N-acetyl-alpha-D-muramoyl-L-alanyl-gamma-D-glutamyl-meso-2,6-diaminopimelate + ADP + phosphate + H(+). The protein operates within cell wall biogenesis; peptidoglycan biosynthesis. Its function is as follows. Catalyzes the addition of meso-diaminopimelic acid to the nucleotide precursor UDP-N-acetylmuramoyl-L-alanyl-D-glutamate (UMAG) in the biosynthesis of bacterial cell-wall peptidoglycan. In Janthinobacterium sp. (strain Marseille) (Minibacterium massiliensis), this protein is UDP-N-acetylmuramoyl-L-alanyl-D-glutamate--2,6-diaminopimelate ligase.